Here is a 161-residue protein sequence, read N- to C-terminus: MKLSEISDNPGARKKRMRIGRGIGSGKGKTGGRGGKGQTARSGVRIKGFEGGQMPLHRRLPKRGFNNIFRLEFSEINLDRLQDAIDAKTIDASAVINAESLVAAGVLRRSRDGVRLLGRGELKSKLTIEVHGATKSAIEAVEKAGGSVKILAPKEDKGEAA.

The segment at 1 to 43 is disordered; the sequence is MKLSEISDNPGARKKRMRIGRGIGSGKGKTGGRGGKGQTARSG. The segment covering 21-37 has biased composition (gly residues); the sequence is RGIGSGKGKTGGRGGKG.

It belongs to the universal ribosomal protein uL15 family. In terms of assembly, part of the 50S ribosomal subunit.

Its function is as follows. Binds to the 23S rRNA. This chain is Large ribosomal subunit protein uL15, found in Rhodopseudomonas palustris (strain BisB5).